Here is a 176-residue protein sequence, read N- to C-terminus: T cell receptor beta constant 1 (176 aa).

The Ig-like C1-type domain maps to 8 to 117; sequence PEVAVFEPSE…WTQDRAKPVT (110 aa). Cys-30 and Cys-95 form a disulfide bridge. Asn-69 carries N-linked (GlcNAc...) asparagine glycosylation. The segment at 130–144 is connecting peptide; it reads CGFTSVSYQQGVLSA. Residues 150 to 170 form a helical membrane-spanning segment; sequence ILLGKATLYAVLVSALVLMAM. The Cytoplasmic portion of the chain corresponds to 171–176; that stretch reads VKRKDF.

In terms of assembly, alpha-beta TR is a heterodimer composed of an alpha and beta chain; disulfide-linked. The alpha-beta TR is associated with the transmembrane signaling CD3 coreceptor proteins to form the TR-CD3 (TcR or TCR). The assembly of alpha-beta TR heterodimers with CD3 occurs in the endoplasmic reticulum where a single alpha-beta TR heterodimer associates with one CD3D-CD3E heterodimer, one CD3G-CD3E heterodimer and one CD247 homodimer forming a stable octameric structure. CD3D-CD3E and CD3G-CD3E heterodimers preferentially associate with TR alpha and TR beta chains, respectively. The association of the CD247 homodimer is the last step of TcR assembly in the endoplasmic reticulum and is required for transport to the cell surface.

It localises to the cell membrane. Constant region of T cell receptor (TR) beta chain. Alpha-beta T cell receptors are antigen specific receptors which are essential to the immune response and are present on the cell surface of T lymphocytes. Recognize peptide-major histocompatibility (MH) (pMH) complexes that are displayed by antigen presenting cells (APC), a prerequisite for efficient T cell adaptive immunity against pathogens. Binding of alpha-beta TR to pMH complex initiates TR-CD3 clustering on the cell surface and intracellular activation of LCK that phosphorylates the ITAM motifs of CD3G, CD3D, CD3E and CD247 enabling the recruitment of ZAP70. In turn, ZAP70 phosphorylates LAT, which recruits numerous signaling molecules to form the LAT signalosome. The LAT signalosome propagates signal branching to three major signaling pathways, the calcium, the mitogen-activated protein kinase (MAPK) kinase and the nuclear factor NF-kappa-B (NF-kB) pathways, leading to the mobilization of transcription factors that are critical for gene expression and essential for T cell growth and differentiation. The T cell repertoire is generated in the thymus, by V-(D)-J rearrangement. This repertoire is then shaped by intrathymic selection events to generate a peripheral T cell pool of self-MH restricted, non-autoaggressive T cells. Post-thymic interaction of alpha-beta TR with the pMH complexes shapes TR structural and functional avidity. The polypeptide is T cell receptor beta constant 1 (Homo sapiens (Human)).